The chain runs to 472 residues: Riboflavin transporter RibJ (472 aa).

Over 1–11 (MLPCFTRKPVD) the chain is Cytoplasmic. A helical transmembrane segment spans residues 12–32 (HPLGFLVALSGLLMQLMSYGI). At 33-58 (DNSYSIFSDDMHKDPSLGYPSVTTIS) the chain is on the extracellular side. Residues 59 to 79 (LGNSVSLGLSPAFGVLCGFLV) traverse the membrane as a helical segment. At 80–85 (DRVPPR) the chain is on the cytoplasmic side. Residues 86–106 (LMMAVSTLMLFAGLWLSSTFA) form a helical membrane-spanning segment. Residues 107–108 (HN) are Extracellular-facing. N108 is a glycosylation site (N-linked (GlcNAc...) asparagine). A helical membrane pass occupies residues 109-129 (VTAVTFSYCLLASISSACMLS). Topologically, residues 130-144 (PGAAATSSWFNRYQG) are cytoplasmic. The chain crosses the membrane as a helical span at residues 145–165 (LAMGINFSGGGVGSAIIPSLA). Residues 166-179 (GKWVVAYGWRKTFR) are Extracellular-facing. The helical transmembrane segment at 180–196 (LMSAFCAIGVVATLLSA) threads the bilayer. The Cytoplasmic segment spans residues 197–271 (RRAPPKKEEA…TMFSRAFLGN (75 aa)). Residues 200 to 248 (PPKKEEAGPSEYDEGQERQEQGEEEQAHTDEENRNNNNSNGETTPARRG) are disordered. The span at 214–233 (GQERQEQGEEEQAHTDEENR) shows a compositional bias: basic and acidic residues. The chain crosses the membrane as a helical span at residues 272–292 (FFCWLIFSWAFYSLIYVAVPY). At 293-315 (VSSMGKAGTVYADISPIPTDIAS) the chain is on the extracellular side. Residues 316 to 336 (TLFTFYGVFQIVGSILVGWLA) traverse the membrane as a helical segment. At 337-341 (TGTTN) the chain is on the cytoplasmic side. The helical transmembrane segment at 342–362 (EFAYVLCATIGGIFCAFLGFC) threads the bilayer. Residues 363–365 (RSY) are Extracellular-facing. Residues 366 to 386 (VAFALLLCVIGFCMAGMFAVM) traverse the membrane as a helical segment. Topologically, residues 387-399 (PALIAERLYGPNL) are cytoplasmic. The helical transmembrane segment at 400-420 (GFYMGAVFLAGVVGGFSAPPI) threads the bilayer. The Extracellular segment spans residues 421–434 (QAELQQRHYGNYTY). The N-linked (GlcNAc...) asparagine glycan is linked to N431. A helical transmembrane segment spans residues 435–455 (VCVFMSACMTLAAAVCYITMW). At 456–472 (RDKRVRIVSAAAEAKLA) the chain is on the cytoplasmic side.

The protein belongs to the major facilitator superfamily. RibJ family.

The protein localises to the cell membrane. Its function is as follows. Transporter involved in riboflavin (vitamin B2) uptake. Also transports FMN and FAD. In Trypanosoma cruzi (strain CL Brener), this protein is Riboflavin transporter RibJ.